Reading from the N-terminus, the 659-residue chain is Cytochrome bo(3) ubiquinol oxidase subunit 1 (659 aa).

At 1 to 14 (MFGKLTLKAIPVDE) the chain is on the extracellular side. The helical transmembrane segment at 15–35 (PIIMVTYISIILIALFISFSI) threads the bilayer. Over 36 to 58 (TYFKKWKYLWYEWFTTVDHKKIS) the chain is Cytoplasmic. Residues 59–79 (IMYGILAFIMLFRGFVDAILM) form a helical membrane-spanning segment. Positions 71, 75, and 98 each coordinate a ubiquinone. At 80–106 (RTQQVIASSGNTGFLPPHHYDQIFTAH) the chain is on the extracellular side. H106 provides a ligand contact to heme b. A helical transmembrane segment spans residues 107–127 (GVIMIFFVAMPLVIGLMNLVV). Over 128 to 145 (PLQIGARDVAFPFLNNLS) the chain is Cytoplasmic. The helical transmembrane segment at 146–166 (FWLNVSGAILLTLSLGIGEFA) threads the bilayer. The Extracellular portion of the chain corresponds to 167-189 (QTGWLAYPPLSEVKYSPGVGVDY). W170 provides a ligand contact to heme b. The chain crosses the membrane as a helical span at residues 190-210 (WIWSLQISGVGTTLTGINFLI). Residues 211-225 (TILKMRAPGMCFFKM) lie on the Cytoplasmic side of the membrane. A helical membrane pass occupies residues 226–246 (PVFTWAALCTNILIVISFPVL). Topologically, residues 247-277 (TTTLLLLTLDRCFDFHFFTNNFGGNPMMYVN) are extracellular. The chain crosses the membrane as a helical span at residues 278–298 (LIWIWGHPEVYILVLPVFGVF). H284 serves as a coordination point for Cu(2+). A cross-link (1'-histidyl-3'-tyrosine (His-Tyr)) is located at residues 284–288 (HPEVY). Fe(II)-heme o is bound at residue Y288. The Cytoplasmic segment spans residues 299–309 (SEVVATFSKKR). A helical transmembrane segment spans residues 310–330 (LFGYVSLVWATLAITILSFIV). Residues 331-347 (WLHHFFTMGAGSNVNAF) are Extracellular-facing. H333 and H334 together coordinate Cu(2+). Residues 348-368 (FGITTMIIAIPTGVKIFNWLF) traverse the membrane as a helical segment. The Cytoplasmic portion of the chain corresponds to 369-380 (TMYQGRVHMHSS). A helical membrane pass occupies residues 381 to 401 (MLWTIGFLITFSIGGMTGVLL). At 402-413 (SIPPADFILHNS) the chain is on the extracellular side. Residues H411 and H419 each coordinate Fe(II)-heme o. The helical transmembrane segment at 414-434 (LFLVAHFHNVIIGGVVFGCFA) threads the bilayer. H421 is a binding site for heme b. Residues 435-456 (GINYWFPKLFGFILNELWGKRA) lie on the Cytoplasmic side of the membrane. Residues 457-477 (FWFWIIGFFTAFMPLYFLGFM) traverse the membrane as a helical segment. Residues 478 to 490 (GMTRRLSQNIDIE) lie on the Extracellular side of the membrane. Positions 481 and 482 each coordinate heme b. The helical transmembrane segment at 491–511 (FHFLLSIAAIGAILIGIGILC) threads the bilayer. At 512–580 (QIIQFWVSVR…KNQVQKKQYS (69 aa)) the chain is on the cytoplasmic side. Residues 581-601 (AIHMPKNTGLGIFISFFSLLF) form a helical membrane-spanning segment. The Extracellular portion of the chain corresponds to 602–605 (GFSA). The helical transmembrane segment at 606-626 (VWNIIWLSFLSFLVVIISLIF) threads the bilayer. At 627–659 (KSIDENTEYTVSVKEIESIENRHLENVQKAGLK) the chain is on the cytoplasmic side.

Belongs to the heme-copper respiratory oxidase family. In terms of assembly, the cytochrome bo(3) ubiquinol oxidase complex is a heterooctamer of two A chains, two B chains, two C chains and two D chains. It depends on Cu(2+) as a cofactor. Requires heme b as cofactor. The cofactor is Fe(II)-heme o.

It localises to the cell membrane. It catalyses the reaction 2 a ubiquinol + O2 + n H(+)(in) = 2 a ubiquinone + 2 H2O + n H(+)(out). Cytochrome bo(3) ubiquinol oxidase is the terminal enzyme in the aerobic respiratory chain. Catalyzes the four-electron reduction of O2 to water, using a ubiquinol as a membrane soluble electron donor for molecular oxygen reduction. Has proton pump activity across the membrane in addition to electron transfer, pumping 2 protons/electron and generating a proton motive force. All the redox centers of this enzyme complex are located within the largest subunit, subunit I. Protons are probably pumped via D- and K- channels found in this subunit. The chain is Cytochrome bo(3) ubiquinol oxidase subunit 1 (cyoB) from Buchnera aphidicola subsp. Schizaphis graminum (strain Sg).